We begin with the raw amino-acid sequence, 236 residues long: Phosphoribosylaminoimidazole-succinocarboxamide synthase (236 aa).

The protein belongs to the SAICAR synthetase family.

The catalysed reaction is 5-amino-1-(5-phospho-D-ribosyl)imidazole-4-carboxylate + L-aspartate + ATP = (2S)-2-[5-amino-1-(5-phospho-beta-D-ribosyl)imidazole-4-carboxamido]succinate + ADP + phosphate + 2 H(+). It participates in purine metabolism; IMP biosynthesis via de novo pathway; 5-amino-1-(5-phospho-D-ribosyl)imidazole-4-carboxamide from 5-amino-1-(5-phospho-D-ribosyl)imidazole-4-carboxylate: step 1/2. This Rickettsia akari (strain Hartford) protein is Phosphoribosylaminoimidazole-succinocarboxamide synthase.